A 359-amino-acid polypeptide reads, in one-letter code: Type-1 angiotensin II receptor (359 aa).

Residues 1-25 lie on the Extracellular side of the membrane; that stretch reads MILNSSTEDGIKRIQDDCPKAGRHN. N-linked (GlcNAc...) asparagine glycosylation is present at Asn-4. 2 residues coordinate angiotensin II: Gln-15 and Asp-17. 2 disulfides stabilise this stretch: Cys-18–Cys-274 and Cys-101–Cys-180. A helical membrane pass occupies residues 26–55; the sequence is YIFIMIPTLYSIIFVVGLFGNSLVVIVIYF. At 56–61 the chain is on the cytoplasmic side; sequence YMKLKT. A helical membrane pass occupies residues 62–89; the sequence is VASVFLLNLALADLCFLLTLPLWAVYTA. The Extracellular portion of the chain corresponds to 90 to 98; sequence MEYRWPFGN. Residues 99–125 traverse the membrane as a helical segment; it reads YLCKIASGSVSFNLYASVFLLTCLSID. The Cytoplasmic segment spans residues 126–141; it reads RYLAIVHPMKSRLRRT. Residues 142–165 traverse the membrane as a helical segment; the sequence is MLVAKVTCIIIWLLAGLASLPTII. The Extracellular portion of the chain corresponds to 166-190; sequence HRNVFFIENTNITVCAFHYESQNST. Arg-167 is an angiotensin II binding site. Asn-176 carries N-linked (GlcNAc...) asparagine glycosylation. Positions 182, 183, and 184 each coordinate angiotensin II. Asn-188 carries an N-linked (GlcNAc...) asparagine glycan. Residues 191-216 traverse the membrane as a helical segment; that stretch reads LPVGLGLTKNILGFLFPFLIILTSYT. Lys-199 contributes to the angiotensin II binding site. Topologically, residues 217–239 are cytoplasmic; that stretch reads LIWKTLKKAYEIQKNKPRKDDIF. A helical membrane pass occupies residues 240–268; it reads KIILAIVLFFFFSWVPHQIFTFMDVLIQL. Topologically, residues 269–278 are extracellular; it reads GLIRDCKIED. Residues 279 to 304 form a helical membrane-spanning segment; sequence IVDTAMPITICLAYFNNCLNPPFYGF. Residues 305–359 lie on the Cytoplasmic side of the membrane; sequence LGKKFKKYFLQLLKYIPPKAKSHSNLSTKMSTLSYRPSENGNSSTKKPAPCTEVE. Positions 335 to 350 are enriched in polar residues; the sequence is STLSYRPSENGNSSTK. Residues 335–359 form a disordered region; the sequence is STLSYRPSENGNSSTKKPAPCTEVE. Cys-355 is lipidated: S-palmitoyl cysteine.

It belongs to the G-protein coupled receptor 1 family. As to quaternary structure, interacts with MAS1. Interacts with ARRB1. Interacts with FLNA (via filamin repeat 21); increases PKA-mediated phosphorylation of FLNA. In terms of processing, C-terminal Ser or Thr residues may be phosphorylated.

It localises to the cell membrane. Functionally, receptor for angiotensin II, a vasoconstricting peptide, which acts as a key regulator of blood pressure and sodium retention by the kidney. The activated receptor in turn couples to G-alpha proteins G(q) (GNAQ, GNA11, GNA14 or GNA15) and thus activates phospholipase C and increases the cytosolic Ca(2+) concentrations, which in turn triggers cellular responses such as stimulation of protein kinase C. The protein is Type-1 angiotensin II receptor (AGTR1) of Ovis aries (Sheep).